The chain runs to 94 residues: Integration host factor subunit beta (94 aa).

This sequence belongs to the bacterial histone-like protein family. Heterodimer of an alpha and a beta chain.

Its function is as follows. This protein is one of the two subunits of integration host factor, a specific DNA-binding protein that functions in genetic recombination as well as in transcriptional and translational control. In Escherichia fergusonii (strain ATCC 35469 / DSM 13698 / CCUG 18766 / IAM 14443 / JCM 21226 / LMG 7866 / NBRC 102419 / NCTC 12128 / CDC 0568-73), this protein is Integration host factor subunit beta.